The following is a 213-amino-acid chain: Small ribosomal subunit protein uS3 (213 aa).

The KH type-2 domain occupies 38 to 106; the sequence is IREYLENRLS…RVHINIVEIK (69 aa).

This sequence belongs to the universal ribosomal protein uS3 family. Part of the 30S ribosomal subunit. Forms a tight complex with proteins S10 and S14.

In terms of biological role, binds the lower part of the 30S subunit head. Binds mRNA in the 70S ribosome, positioning it for translation. The protein is Small ribosomal subunit protein uS3 of Oceanobacillus iheyensis (strain DSM 14371 / CIP 107618 / JCM 11309 / KCTC 3954 / HTE831).